A 285-amino-acid polypeptide reads, in one-letter code: 2-hydroxy-6-oxononadienedioate/2-hydroxy-6-oxononatrienedioate hydrolase 1 (285 aa).

The Proton acceptor role is filled by His265.

Belongs to the AB hydrolase superfamily. MhpC family. Homodimer.

It carries out the reaction (2Z,4E)-2-hydroxy-6-oxonona-2,4-dienedioate + H2O = (2Z)-2-hydroxypenta-2,4-dienoate + succinate + H(+). The enzyme catalyses (2Z,4E,7E)-2-hydroxy-6-oxonona-2,4,7-trienedioate + H2O = (2Z)-2-hydroxypenta-2,4-dienoate + fumarate + H(+). It participates in aromatic compound metabolism; 3-phenylpropanoate degradation. Its function is as follows. Catalyzes the cleavage of the C5-C6 bond of 2-hydroxy-6-oxononadienedioate and 2-hydroxy-6-oxononatrienedioate, a dienol ring fission product of the bacterial meta-cleavage pathway for degradation of phenylpropionic acid. The protein is 2-hydroxy-6-oxononadienedioate/2-hydroxy-6-oxononatrienedioate hydrolase 1 of Pseudomonas putida (Arthrobacter siderocapsulatus).